Consider the following 361-residue polypeptide: tRNA/tmRNA (uracil-C(5))-methyltransferase (361 aa).

Residues Gln185, Tyr213, Asn218, Glu234, and Asp294 each coordinate S-adenosyl-L-methionine. The active-site Nucleophile is the Cys319. The active-site Proton acceptor is the Glu353.

It belongs to the class I-like SAM-binding methyltransferase superfamily. RNA M5U methyltransferase family. TrmA subfamily.

It carries out the reaction uridine(54) in tRNA + S-adenosyl-L-methionine = 5-methyluridine(54) in tRNA + S-adenosyl-L-homocysteine + H(+). It catalyses the reaction uridine(341) in tmRNA + S-adenosyl-L-methionine = 5-methyluridine(341) in tmRNA + S-adenosyl-L-homocysteine + H(+). Dual-specificity methyltransferase that catalyzes the formation of 5-methyluridine at position 54 (m5U54) in all tRNAs, and that of position 341 (m5U341) in tmRNA (transfer-mRNA). In Pseudomonas syringae pv. syringae (strain B728a), this protein is tRNA/tmRNA (uracil-C(5))-methyltransferase.